Here is a 155-residue protein sequence, read N- to C-terminus: Snaclec clone 2100755 (155 aa).

Positions 1–23 (MGRFIFVSFGLLVVFLSLSGTAA) are cleaved as a signal peptide. 3 cysteine pairs are disulfide-bonded: Cys-25–Cys-36, Cys-53–Cys-144, and Cys-119–Cys-136. Positions 32 to 145 (YDGHCYQVFS…CEKSVSFVCK (114 aa)) constitute a C-type lectin domain.

Belongs to the snaclec family. Heterodimer; disulfide-linked.

Its subcellular location is the secreted. Its function is as follows. Interferes with one step of hemostasis (modulation of platelet aggregation, or coagulation cascade, for example). This is Snaclec clone 2100755 from Deinagkistrodon acutus (Hundred-pace snake).